A 390-amino-acid polypeptide reads, in one-letter code: Protein PIN-LIKES 3 (390 aa).

Topologically, residues 1-14 (MVKLLELFITSSKP) are lumenal. The helical transmembrane segment at 15–35 (VVEILLITSVGFYMALDGVNL) threads the bilayer. Topologically, residues 36 to 43 (LGHDARKY) are cytoplasmic. Residues 44–61 (LNNIVFYVFSPSLIGSRL) traverse the membrane as a helical segment. Residues 62–76 (ADSVTYESLVKMWFM) lie on the Lumenal side of the membrane. The helical transmembrane segment at 77-97 (PVNVLLTFIIGSLLGWIVIVI) threads the bilayer. Over 98-107 (TKPPSHLRGL) the chain is Cytoplasmic. The helical transmembrane segment at 108 to 128 (ILGCCAAGNLGNMPLIIIPAV) threads the bilayer. The Lumenal segment spans residues 129 to 144 (CKEKGGPFGDPESCQK). A helical membrane pass occupies residues 145–165 (YGMGYVALSMAMGSIYIWTYV). Over 166–227 (YNLMRVLSNS…SLSQKVNLKT (62 aa)) the chain is Cytoplasmic. The helical transmembrane segment at 228–248 (IFAPSTIAAMIALVIGLITPL) threads the bilayer. The Lumenal segment spans residues 249–265 (RKLIIGTEAPLRVLQDS). A helical membrane pass occupies residues 266–286 (VTLVGDGAVPAMTMIIGGNLL). The Cytoplasmic segment spans residues 287–297 (KGLRSSGMKMS). A helical membrane pass occupies residues 298 to 318 (SIIGVLVARYVLLPMSGVLIV). At 319–331 (RGAYKLDLVTSEP) the chain is on the lumenal side. Residues 332–352 (LYQFVLLLQYAVPPAMNLGTI) traverse the membrane as a helical segment. The Cytoplasmic portion of the chain corresponds to 353 to 364 (TQLFGTGESECS). Residues 365–385 (VIMLWTYSLASIALTVWPTFF) traverse the membrane as a helical segment. The Lumenal portion of the chain corresponds to 386-390 (MWLVA).

This sequence belongs to the auxin efflux carrier (TC 2.A.69.2) family. As to expression, expressed in seedlings, rosette and cauline leaves, flowers and siliques.

It is found in the endoplasmic reticulum membrane. In terms of biological role, involved in cellular auxin homeostasis by regulating auxin metabolism. Regulates intracellular auxin accumulation at the endoplasmic reticulum and thus auxin availability for nuclear auxin signaling. This chain is Protein PIN-LIKES 3 (PILS3), found in Arabidopsis thaliana (Mouse-ear cress).